The chain runs to 322 residues: Cytochrome c biogenesis protein CcsA (322 aa).

8 consecutive transmembrane segments (helical) span residues 9–29, 44–64, 71–91, 97–117, 143–163, 225–245, 254–274, and 286–306; these read ILTHISFSVVSIVITIHLITL, GMITTFFCITGLLVTRWIFLG, LYESLIFLSWSFSIIHMVPYF, FLSAITAPSTFFTQGFATSGL, MILGYAALLCGSLFSVAFLVI, IISIGFIFLTIGILSGAVWAN, WDPKETWAFITWTIFAIYFHI, and AIVASIGFLLIWICYFGVNLL.

The protein belongs to the CcmF/CycK/Ccl1/NrfE/CcsA family. As to quaternary structure, may interact with Ccs1.

The protein resides in the plastid. Its subcellular location is the chloroplast thylakoid membrane. Required during biogenesis of c-type cytochromes (cytochrome c6 and cytochrome f) at the step of heme attachment. In Manihot esculenta (Cassava), this protein is Cytochrome c biogenesis protein CcsA.